Reading from the N-terminus, the 128-residue chain is uncharacterized protein (128 aa).

This is an uncharacterized protein from Archaeoglobus fulgidus (strain ATCC 49558 / DSM 4304 / JCM 9628 / NBRC 100126 / VC-16).